A 1809-amino-acid polypeptide reads, in one-letter code: Proprotein convertase subtilisin/kexin type 5 (1809 aa).

The signal sequence occupies residues 1–34 (MDWGWGSRCCRPGRRDLLCVLALLAGCLLPVCRT). Positions 35–116 (RVYTNHWAVK…QQVVKKRTKR (82 aa)) are excised as a propeptide. Residues 117–1700 (DYDLSRAQST…DTVFHEHTKT (1584 aa)) are Extracellular-facing. One can recognise a Peptidase S8 domain in the interval 136-455 (MWYMHCSDNT…FGLMDAEAMV (320 aa)). Catalysis depends on charge relay system residues Asp173 and His214. N-linked (GlcNAc...) asparagine glycans are attached at residues Asn227 and Asn383. The Charge relay system role is filled by Ser388. Residues 463-603 (TVPQQHVCVE…SLVLYGTSVQ (141 aa)) form the P/Homo B domain. Positions 521–523 (RGD) match the Cell attachment site motif. 21 FU repeats span residues 632 to 682 (EDYA…GHFH), 685 to 732 (KKRC…GSYQ), 736 to 779 (KNIC…GQFF), 781 to 826 (GHDC…SYYL), 834 to 881 (YKSC…GEYI), 884 to 929 (QGHC…WKFE), 931 to 964 (KKQCHPCHHTCQGCQGSGPSNCTSCKAGEFQDSE), 965 to 1010 (YGEC…KTFG), 1012 to 1054 (KWEC…GFYG), 1058 to 1099 (LGEC…PTWP), 1137 to 1179 (TRQY…GTWL), 1183 to 1230 (SSSC…GFYA), 1232 to 1276 (DGVC…KHVA), 1278 to 1321 (EGVC…NFYP), 1323 to 1369 (MRQC…GTYK), 1373 to 1418 (NDEC…IEYW), 1422 to 1467 (SHRC…GYHT), 1471 to 1516 (SHQC…GYYG), 1520 to 1567 (SGRC…HYYA), 1571 to 1616 (AQTC…GEYR), and 1622 to 1669 (NFNC…SHPH). A CRM (Cys-rich motif) region spans residues 638–1685 (CDPECSEVGC…DCQSSTDECI (1048 aa)). Asn667 carries N-linked (GlcNAc...) asparagine glycosylation. Residues Asn754, Asn804, and Asn854 are each glycosylated (N-linked (GlcNAc...) asparagine). N-linked (GlcNAc...) asparagine glycans are attached at residues Asn1642 and Asn1664. Residues 1701–1721 (ALLVTSGAMLLLLLGAAVVVW) form a helical membrane-spanning segment. The Cytoplasmic portion of the chain corresponds to 1722–1809 (RKSRSQPVAK…EYDDESYSYQ (88 aa)). 2 AC regions span residues 1757–1776 (VIEYRDRDYDEDDEDDIVYM) and 1788–1809 (YGLLDEAEDDELEYDDESYSYQ).

It belongs to the peptidase S8 family. Expressed in the intestine, brain, adrenal gland, anterior pituitary, thyroid, ovaries, testis and lung. Highest levels are found in the gut, duodenum, jejunum and ileum. Expression is higher in female than in male reproductive organs.

Its subcellular location is the secreted. It localises to the endomembrane system. In terms of biological role, serine endoprotease that processes various proproteins by cleavage at paired basic amino acids, recognizing the RXXX[KR]R consensus motif. Likely functions in the constitutive and regulated secretory pathways. Plays an essential role in pregnancy establishment by proteolytic activation of a number of important factors such as BMP2, CALD1 and alpha-integrins. May be responsible for the maturation of gastrointestinal peptides. May be involved in the cellular proliferation of adrenal cortex via the activation of growth factors. This is Proprotein convertase subtilisin/kexin type 5 (Pcsk5) from Rattus norvegicus (Rat).